Consider the following 1107-residue polypeptide: DNA polymerase delta catalytic subunit (1107 aa).

Positions 1 to 34 are disordered; the sequence is MDGKRRPGPGPGVPPKRARGGLWDDDDAPRPSQF. The Nuclear localization signal motif lies at 4–19; the sequence is KRRPGPGPGVPPKRAR. Arginine 19 carries the omega-N-methylarginine modification. A Glycyl lysine isopeptide (Lys-Gly) (interchain with G-Cter in SUMO2) cross-link involves residue lysine 574. Positions 1012, 1015, 1026, and 1029 each coordinate Zn(2+). The CysA-type zinc-finger motif lies at 1012–1029; that stretch reads CIGCRTVLSHQGAVCEFC. The [4Fe-4S] cluster site is built by cysteine 1058, cysteine 1061, cysteine 1071, and cysteine 1076. The short motif at 1058 to 1076 is the CysB motif element; it reads CQRCQGSLHEDVICTSRDC.

Belongs to the DNA polymerase type-B family. Component of the tetrameric DNA polymerase delta complex (Pol-delta4), which consists of POLD1/p125, POLD2/p50, POLD3/p66/p68 and POLD4/p12, with POLD1 bearing both DNA polymerase and 3' to 5' proofreading exonuclease activities. Within Pol-delta4, directly interacts with POLD2 and POLD4. Following genotoxic stress by DNA-damaging agents, such as ultraviolet light and methyl methanesulfonate, or by replication stress induced by treatment with hydroxyurea or aphidicolin, Pol-delta4 is converted into a trimeric form of the complex (Pol-delta3) by POLD4 degradation. Pol-delta3 is the major form at S phase replication sites and DNA damage sites. POLD1 displays different catalytic properties depending upon the complex it is found in. It exhibits higher proofreading activity and fidelity than Pol-delta4, making it particularly well suited to respond to DNA damage. Directly interacts with PCNA, as do POLD3 and POLD4; this interaction stimulates Pol-delta4 polymerase activity. As POLD2 and POLD4, directly interacts with WRNIP1; this interaction stimulates DNA polymerase delta-mediated DNA synthesis, independently of the presence of PCNA. This stimulation may be due predominantly to an increase of initiation frequency and also to increased processivity. Also observed as a dimeric complex with POLD2 (Pol-delta2 complex). Pol-delta2 is relatively insensitive to the PCNA stimulation (2-5-fold) compared to Pol-delta4 that is stimulated by over 50-fold. The DNA polymerase delta complex interacts with POLDIP2; this interaction is probably mediated through direct binding to POLD2. Interacts with CIAO1. Interacts with POLDIP2. Interacts with RFC1. [4Fe-4S] cluster is required as a cofactor. Widely expressed, with high levels of expression in heart and lung.

The protein localises to the nucleus. It carries out the reaction DNA(n) + a 2'-deoxyribonucleoside 5'-triphosphate = DNA(n+1) + diphosphate. Its activity is regulated as follows. Regulated by alteration of quaternary structure. Exhibits burst rates of DNA synthesis are about 5 times faster in the presence of POLD4 (Pol-delta4 complex) than in its absence (Pol-delta3 complex), while the affinity of the enzyme for its DNA and dNTP substrates appears unchanged. The Pol-delta3 complex is more likely to proofread DNA synthesis because it cleaves single-stranded DNA twice as fast and transfers mismatched DNA from the polymerase to the exonuclease sites 9 times faster compared to the Pol-delta3 complex. Pol-delta3 also extends mismatched primers 3 times more slowly in the absence of POLD4. The conversion of Pol-delta4 into Pol-delta3 is induced by genotoxic stress or by replication stress leading POLD4 degradation. Stimulated in the presence of PCNA. This stimulation is further increased in the presence of KCTD13/PDIP1, most probably via direct interaction between KCTD13 and POLD2. As the catalytic component of the trimeric (Pol-delta3 complex) and tetrameric DNA polymerase delta complexes (Pol-delta4 complex), plays a crucial role in high fidelity genome replication, including in lagging strand synthesis, and repair. Exhibits both DNA polymerase and 3'- to 5'-exonuclease activities. Requires the presence of accessory proteins POLD2, POLD3 and POLD4 for full activity. Depending upon the absence (Pol-delta3) or the presence of POLD4 (Pol-delta4), displays differences in catalytic activity. Most notably, expresses higher proofreading activity in the context of Pol-delta3 compared with that of Pol-delta4. Although both Pol-delta3 and Pol-delta4 process Okazaki fragments in vitro, Pol-delta3 may be better suited to fulfill this task, exhibiting near-absence of strand displacement activity compared to Pol-delta4 and stalling on encounter with the 5'-blocking oligonucleotides. Pol-delta3 idling process may avoid the formation of a gap, while maintaining a nick that can be readily ligated. Along with DNA polymerase kappa, DNA polymerase delta carries out approximately half of nucleotide excision repair (NER) synthesis following UV irradiation. Under conditions of DNA replication stress, in the presence of POLD3 and POLD4, may catalyze the repair of broken replication forks through break-induced replication (BIR). Involved in the translesion synthesis (TLS) of templates carrying O6-methylguanine, 8oxoG or abasic sites. In Homo sapiens (Human), this protein is DNA polymerase delta catalytic subunit.